The chain runs to 98 residues: Integration host factor subunit alpha (98 aa).

The segment at Asn51 to Ile71 is disordered. Residues Asp53–Glu69 show a composition bias toward basic and acidic residues.

Belongs to the bacterial histone-like protein family. As to quaternary structure, heterodimer of an alpha and a beta chain.

This protein is one of the two subunits of integration host factor, a specific DNA-binding protein that functions in genetic recombination as well as in transcriptional and translational control. In Vibrio cholerae serotype O1 (strain ATCC 39541 / Classical Ogawa 395 / O395), this protein is Integration host factor subunit alpha.